We begin with the raw amino-acid sequence, 354 residues long: Uroporphyrinogen decarboxylase (354 aa).

Residues 27–31, D77, Y154, S209, and H327 each bind substrate; that span reads RQAGR.

Belongs to the uroporphyrinogen decarboxylase family. Homodimer.

The protein resides in the cytoplasm. The catalysed reaction is uroporphyrinogen III + 4 H(+) = coproporphyrinogen III + 4 CO2. It functions in the pathway porphyrin-containing compound metabolism; protoporphyrin-IX biosynthesis; coproporphyrinogen-III from 5-aminolevulinate: step 4/4. Its function is as follows. Catalyzes the decarboxylation of four acetate groups of uroporphyrinogen-III to yield coproporphyrinogen-III. This Shewanella piezotolerans (strain WP3 / JCM 13877) protein is Uroporphyrinogen decarboxylase.